The primary structure comprises 299 residues: Glutamyl-Q tRNA(Asp) synthetase (299 aa).

L-glutamate is bound by residues 9 to 13 and E45; that span reads RFAPS. Residues 12 to 22 carry the 'HIGH' region motif; that stretch reads PSPTGPLHFGS. Residues C101, C103, and C118 each coordinate Zn(2+). L-glutamate is bound by residues Y170 and R188. Positions 226-230 match the 'KMSKS' region motif; it reads KLSKS. K229 lines the ATP pocket.

It belongs to the class-I aminoacyl-tRNA synthetase family. GluQ subfamily. Zn(2+) serves as cofactor.

Functionally, catalyzes the tRNA-independent activation of glutamate in presence of ATP and the subsequent transfer of glutamate onto a tRNA(Asp). Glutamate is transferred on the 2-amino-5-(4,5-dihydroxy-2-cyclopenten-1-yl) moiety of the queuosine in the wobble position of the QUC anticodon. In Xanthomonas axonopodis pv. citri (strain 306), this protein is Glutamyl-Q tRNA(Asp) synthetase.